A 421-amino-acid chain; its full sequence is 5-hydroxytryptamine receptor 2 (421 aa).

Residues 1–21 (MLCGRLRHTMNSTTCFFSHRT) are Extracellular-facing. A glycan (N-linked (GlcNAc...) asparagine) is linked at Asn-11. The chain crosses the membrane as a helical span at residues 22-42 (VLIGIVGSLIIAVSVVGNVLV). Topologically, residues 43 to 59 (CLAIFTEPILSHSKSKF) are cytoplasmic. The chain crosses the membrane as a helical span at residues 60-79 (FIVSLAVADLLLALLVMTFA). Residues 80 to 95 (LVNSLYGYWLFGETFC) lie on the Extracellular side of the membrane. A disulfide bridge links Cys-95 with Cys-210. A helical membrane pass occupies residues 96-118 (FIWMSADVMCETASIFSICVISY). Residues 119–138 (NRLKQVQKPLQYEEFMTTTR) are Cytoplasmic-facing. Residues 139 to 160 (ALLIIASLWICSFVVSFVPFFL) form a helical membrane-spanning segment. Residues 161–213 (EWHELSMEEIKTIFKDLISDKVKTSDAHTFSFALEQTLGDNRTSNPKPECLFD) lie on the Extracellular side of the membrane. A helical membrane pass occupies residues 214-234 (VHFIYSVIYSLFCFYIPCTLM). The Cytoplasmic portion of the chain corresponds to 235-274 (LRNYLRLFLIAKKHHVRIKNLHRLHRNQGTQGSKAARTLT). A helical transmembrane segment spans residues 275-295 (IITGTFLACWLPFFIINPIEA). Over 296 to 304 (VDEHLIPLE) the chain is Extracellular. A helical membrane pass occupies residues 305–325 (CFMVTIWLGYFNSCVNPIIYG). At 326–421 (TSNSKFRAAF…MLSESDTVFS (96 aa)) the chain is on the cytoplasmic side.

Belongs to the G-protein coupled receptor 1 family. As to expression, central nervous system.

It localises to the cell membrane. In terms of biological role, this is one of the several different receptors for 5-hydroxytryptamine (serotonin). 5-HT plays important roles in various behavioral and physiological processes in aplysia. These include feeding, locomotion, circadian rhythm, learning and memory, synaptic plasticity, and synaptic growth. This receptor is mediated by G proteins that stimulate phospholipase C. This Aplysia californica (California sea hare) protein is 5-hydroxytryptamine receptor 2 (5HTB2).